A 985-amino-acid chain; its full sequence is MASNPDRGEILLTELQVDSRPLPFSENVSAVQKLDFSDTIVQQKLDDVKDRIKREIRKELKIKEGAENLRKVTTDKKNLAYVDNILKKSNKKLEELHHKLQELNAHIVVSDPEDYTDCPRTPDTPNSDSRSSTSNNRRLMALQKQLDIELKVKQGAENMIQMYSNGPSKDRKLHGTAQQLLQDNKTKIEVIRMHILQAVLTNELAFDNAKPVISPLELRNGRIIEHHFRIEFAVAEGAKNVMKLLGSGKVTDRKALSEAQARFNESSQKLDLLKYSLEQRLNELPKNHPKSSVVIEELSLVASPTLSPRQSMLSTQNQYSTLSKPAALTGTLEVRLWGAKISWENVPGRSKATSVALPGWSPSENRSSFMSRTSKSKSGSSRNLLKTDDLSNDVCAVLKLDNTVVGQTIWKPISNQSWDQKFTLELDRSRELEISVYWRDWRSLCAVKFLRLEDFLDNQRHGMALYLEPQGTLFAEVTFFNPVIERRPKLQRQKKIFSKQQGKTFLRAPQMNINIATWGRLVRRAIPTVNHSGTFSPQTPVPATVPVVDARTPELAPPASDSTVTKLDFDLEPEAPPAPPRASSLGEIDDSSELRVLDIPGQGSETVFDIENDRNNMRPKSKSEYELNIPDSSRSCWSVGELEDKRSQQRFQFNLQDFRCCAVLGRGHFGKVLLAEYKHTNEMFAIKALKKGDIVARDEVDSLMCEKRIFETVNSVRHPFLVNLFACFQTKEHVCFVMEYAAGGDLMMHIHTDVFSEPRAVFYAACVVLGLQYLHEHKIVYRDLKLDNLLLDTEASVKIADFGLCKEGMGYGDRTSTFCGTPEFLAPEVLTETSYTRAVDWWGLGVLIYEMLVGESPFPGDDEEEVFDSIVNDEVRYPRFLSTEAISIMRRLLRRNPERRLGAGEKDAEDVKKHPFFRLTDWSALLDKKVKPPFVPTIRGREDVSNFDDEFTSEAPILTPPREPRILLEEEQEMFRDFDYVADWC.

Residues 33 to 109 form the REM-1 1 domain; the sequence is KLDFSDTIVQ…LQELNAHIVV (77 aa). Lys77 carries the post-translational modification N6-acetyllysine. Ser110 bears the Phosphoserine mark. The disordered stretch occupies residues 111–136; that stretch reads DPEDYTDCPRTPDTPNSDSRSSTSNN. A phosphothreonine mark is found at Thr121 and Thr124. Low complexity predominate over residues 121 to 136; that stretch reads TPDTPNSDSRSSTSNN. REM-1 domains lie at 121 to 204 and 207 to 286; these read TPDT…TNEL and DNAK…ELPK. Phosphoserine occurs at positions 303, 307, 361, and 363. A disordered region spans residues 352 to 383; it reads ATSVALPGWSPSENRSSFMSRTSKSKSGSSRN. The C2 domain occupies 354 to 474; sequence SVALPGWSPS…LYLEPQGTLF (121 aa). Low complexity predominate over residues 366-382; it reads RSSFMSRTSKSKSGSSR. Residues 383-464 form a necessary to rescue apical junction formation region; sequence NLLKTDDLSN…FLDNQRHGMA (82 aa). Phosphoserine occurs at positions 536, 584, 621, and 632. The tract at residues 570 to 590 is disordered; the sequence is DLEPEAPPAPPRASSLGEIDD. The Protein kinase domain maps to 658-917; sequence FRCCAVLGRG…AEDVKKHPFF (260 aa). ATP-binding positions include 664–672 and Lys687; that span reads LGRGHFGKV. The Proton acceptor role is filled by Asp783. Position 817 is a phosphothreonine; by PDPK1 (Thr817). Residues 918-978 form a necessary for the catalytic activity region; sequence RLTDWSALLD…EEEQEMFRDF (61 aa). The region spanning 918–985 is the AGC-kinase C-terminal domain; that stretch reads RLTDWSALLD…RDFDYVADWC (68 aa). A Phosphoserine modification is found at Ser953. Thr959 carries the phosphothreonine modification. Residues 979-985 are negatively regulates the responsiveness of the catalytic activity by cardiolipin and is required for optimal activation by the GTP-bound RhoA; it reads DYVADWC.

Belongs to the protein kinase superfamily. AGC Ser/Thr protein kinase family. PKC subfamily. In terms of assembly, interacts (via the REM repeats) with RHOA (GTP-bound form preferentially) and interacts (via the REM repeats) with RAC1 (GTP-bound form preferentially); the interactions induce its autophosphorylation. Interacts with RHOC. Interacts with NCK1 (via SH3 domains) and NCK2. Interacts with CD44. Interacts (via C-terminal kinase domain) with PDPK1; the interaction stimulates PDPK1 kinase activity. Interacts with MAP3K2; the interaction activates PRK2 kinase activity in a MAP3K2-independent kinase activity. Interacts (via C-terminal domain) with AKT1; the interaction occurs with the C-terminal cleavage product of PRK2 in apoptotic cells. Interacts (via C-terminus) with PTPN13 (via PDZ 3 domain). Interacts with CDK10. In terms of processing, phosphorylated during mitosis. Autophosphorylated. Phosphorylated. Binding to Rho and Rac promotes autophosphorylation and phosphorylation on serine and threonine residues. Phosphorylated by CDK10. Post-translationally, proteolytically cleaved by caspase-3 during the induction of apoptotic cell death. Activated by limited proteolysis with trypsin. As to expression, expressed in liver (at protein level).

The protein localises to the cytoplasm. Its subcellular location is the nucleus. The protein resides in the membrane. It localises to the cell projection. It is found in the lamellipodium. The protein localises to the cytoskeleton. Its subcellular location is the cleavage furrow. The protein resides in the midbody. It localises to the cell junction. It catalyses the reaction L-seryl-[protein] + ATP = O-phospho-L-seryl-[protein] + ADP + H(+). The enzyme catalyses L-threonyl-[protein] + ATP = O-phospho-L-threonyl-[protein] + ADP + H(+). Its activity is regulated as follows. Kinase activity is activated upon binding to GTP-bound Rho1/Rac1 GTPases. Activated by caspase-3 (CASP3) cleavage during apoptosis. Activated by lipids, particularly cardiolipin and to a lesser extent by other acidic phospholipids and unsaturated fatty acids. Two specific sites, Thr-817 (activation loop of the kinase domain) and Thr-959 (turn motif), need to be phosphorylated for its full activation. Its function is as follows. PKC-related serine/threonine-protein kinase and Rho/Rac effector protein that participates in specific signal transduction responses in the cell. Plays a role in the regulation of cell cycle progression, actin cytoskeleton assembly, cell migration, cell adhesion, tumor cell invasion and transcription activation signaling processes. Phosphorylates CTTN in hyaluronan-induced astrocytes and hence decreases CTTN ability to associate with filamentous actin. Phosphorylates HDAC5, therefore lead to impair HDAC5 import. Direct RhoA target required for the regulation of the maturation of primordial junctions into apical junction formation in bronchial epithelial cells. Required for G2/M phases of the cell cycle progression and abscission during cytokinesis in a ECT2-dependent manner. Stimulates FYN kinase activity that is required for establishment of skin cell-cell adhesion during keratinocytes differentiation. Regulates epithelial bladder cells speed and direction of movement during cell migration and tumor cell invasion. Inhibits Akt pro-survival-induced kinase activity. Mediates Rho protein-induced transcriptional activation via the c-fos serum response factor (SRF). Involved in the negative regulation of ciliogenesis. This is Serine/threonine-protein kinase N2 (Pkn2) from Rattus norvegicus (Rat).